Here is a 553-residue protein sequence, read N- to C-terminus: Arginine--tRNA ligase (553 aa).

The 'HIGH' region signature appears at A122–H132.

It belongs to the class-I aminoacyl-tRNA synthetase family. Monomer.

It localises to the cytoplasm. It catalyses the reaction tRNA(Arg) + L-arginine + ATP = L-arginyl-tRNA(Arg) + AMP + diphosphate. The protein is Arginine--tRNA ligase of Mesoplasma florum (strain ATCC 33453 / NBRC 100688 / NCTC 11704 / L1) (Acholeplasma florum).